The following is a 217-amino-acid chain: Ribosomal RNA large subunit methyltransferase E (217 aa).

5 residues coordinate S-adenosyl-L-methionine: Gly71, Trp73, Asp91, Asp107, and Asp132. The active-site Proton acceptor is the Lys172.

The protein belongs to the class I-like SAM-binding methyltransferase superfamily. RNA methyltransferase RlmE family.

It localises to the cytoplasm. The catalysed reaction is uridine(2552) in 23S rRNA + S-adenosyl-L-methionine = 2'-O-methyluridine(2552) in 23S rRNA + S-adenosyl-L-homocysteine + H(+). Functionally, specifically methylates the uridine in position 2552 of 23S rRNA at the 2'-O position of the ribose in the fully assembled 50S ribosomal subunit. The sequence is that of Ribosomal RNA large subunit methyltransferase E from Psychromonas ingrahamii (strain DSM 17664 / CCUG 51855 / 37).